The chain runs to 334 residues: MNSAGLEQCGMIMTRKNYYITTDGLLKRNENTLYFINKDLKRPIPINKIYSIYSYGALTISSQALNLLSKEGIPIHFFNRYGFYSGSFYPRETLLSGDVIIKQAEHVIDHDKRIELARSFVRGAALNMRRVLSYYGIENGISDTLMDLDSSNSVTDVMNVEGRIRSDYYNAIDSILPEGFRIGKRTRRPPENMTNAMISFGNSLLYSTVITELYNTQLNPTISYLHEPFERRYSLALDLSEIFKPTLIDRMIISLIKKKAIKAEDFEHGMNHCLLNNSGKRKFLAEYDRRLGKTVKHRELGRKVSYRRLIRLEAYKLIKHLIGQKSYEPFVMWW.

Mn(2+) contacts are provided by E161, H226, and E241.

Belongs to the CRISPR-associated endonuclease Cas1 family. In terms of assembly, homodimer, forms a heterotetramer with a Cas2 homodimer. The cofactor is Mg(2+). It depends on Mn(2+) as a cofactor.

CRISPR (clustered regularly interspaced short palindromic repeat), is an adaptive immune system that provides protection against mobile genetic elements (viruses, transposable elements and conjugative plasmids). CRISPR clusters contain spacers, sequences complementary to antecedent mobile elements, and target invading nucleic acids. CRISPR clusters are transcribed and processed into CRISPR RNA (crRNA). Acts as a dsDNA endonuclease. Involved in the integration of spacer DNA into the CRISPR cassette. This Methanothermobacter thermautotrophicus (strain ATCC 29096 / DSM 1053 / JCM 10044 / NBRC 100330 / Delta H) (Methanobacterium thermoautotrophicum) protein is CRISPR-associated endonuclease Cas1.